Reading from the N-terminus, the 38-residue chain is Photosystem II reaction center protein M (38 aa).

The chain crosses the membrane as a helical span at residues 7–27 (GFVASILFVLVPSVFLIILYI).

This sequence belongs to the PsbM family. As to quaternary structure, PSII is composed of 1 copy each of membrane proteins PsbA, PsbB, PsbC, PsbD, PsbE, PsbF, PsbH, PsbI, PsbJ, PsbK, PsbL, PsbM, PsbT, PsbX, PsbY, PsbZ, Psb30/Ycf12, peripheral proteins PsbO, CyanoQ (PsbQ), PsbU, PsbV and a large number of cofactors. It forms dimeric complexes.

The protein resides in the cellular thylakoid membrane. Its function is as follows. One of the components of the core complex of photosystem II (PSII). PSII is a light-driven water:plastoquinone oxidoreductase that uses light energy to abstract electrons from H(2)O, generating O(2) and a proton gradient subsequently used for ATP formation. It consists of a core antenna complex that captures photons, and an electron transfer chain that converts photonic excitation into a charge separation. This subunit is found at the monomer-monomer interface. The protein is Photosystem II reaction center protein M of Nostoc sp. (strain PCC 7120 / SAG 25.82 / UTEX 2576).